We begin with the raw amino-acid sequence, 320 residues long: MKNIADIAKIAGVSKSTVSRYLNNGSVSLKTQQKLDEIIRENDYQPNQFAQSLRARRTNMIGAIIPRMNSFAVDETIKGVKTVCDQLNYSLLLNYTNLNIQLEIDALETFYRSKVDGIVFMATEITDQHLEVINKINVPVIIVGQAHDDLHCIIHNDYQAGYLVGDMLGQQGYNDIKFFGVTESDIAVGVQRKEGLIAGLEAHNIQPEISLTSFNYQEAMVDVVEALQAYPHYDAIVGATDSIALAIHKYNSEHKPHAHEKYIVGFGGDPVTDIVSPSIHTINYNFEYAGSVAMDKLNQMIQHQVIEQRIIIDVEQSFEN.

The HTH lacI-type domain occupies 1–55; the sequence is MKNIADIAKIAGVSKSTVSRYLNNGSVSLKTQQKLDEIIRENDYQPNQFAQSLRA. The segment at residues 4 to 23 is a DNA-binding region (H-T-H motif); that stretch reads IADIAKIAGVSKSTVSRYLN.

In terms of biological role, negative regulator of scrB expression. This Staphylococcus xylosus protein is Sucrose operon repressor (scrR).